We begin with the raw amino-acid sequence, 121 residues long: Large ribosomal subunit protein uL18 (121 aa).

This sequence belongs to the universal ribosomal protein uL18 family. In terms of assembly, part of the 50S ribosomal subunit; part of the 5S rRNA/L5/L18/L25 subcomplex. Contacts the 5S and 23S rRNAs.

Functionally, this is one of the proteins that bind and probably mediate the attachment of the 5S RNA into the large ribosomal subunit, where it forms part of the central protuberance. The chain is Large ribosomal subunit protein uL18 from Bdellovibrio bacteriovorus (strain ATCC 15356 / DSM 50701 / NCIMB 9529 / HD100).